The primary structure comprises 339 residues: D-erythrose-4-phosphate dehydrogenase (339 aa).

NAD(+)-binding positions include 12 to 13 (RI) and arginine 81. Substrate-binding positions include 154–156 (SCT), arginine 200, 213–214 (TK), and arginine 236. Cysteine 155 serves as the catalytic Nucleophile. Residue asparagine 318 coordinates NAD(+).

The protein belongs to the glyceraldehyde-3-phosphate dehydrogenase family. Epd subfamily. As to quaternary structure, homotetramer.

The protein localises to the cytoplasm. The enzyme catalyses D-erythrose 4-phosphate + NAD(+) + H2O = 4-phospho-D-erythronate + NADH + 2 H(+). The protein operates within cofactor biosynthesis; pyridoxine 5'-phosphate biosynthesis; pyridoxine 5'-phosphate from D-erythrose 4-phosphate: step 1/5. Functionally, catalyzes the NAD-dependent conversion of D-erythrose 4-phosphate to 4-phosphoerythronate. The sequence is that of D-erythrose-4-phosphate dehydrogenase from Shigella dysenteriae serotype 1 (strain Sd197).